Here is a 184-residue protein sequence, read N- to C-terminus: Photosystem I assembly protein Ycf4 (184 aa).

Transmembrane regions (helical) follow at residues 22 to 42 (FCWAIILFLGSLGFLLIGISS) and 57 to 77 (IIFFPQGLVMSFYGLAGLFIS).

It belongs to the Ycf4 family.

The protein localises to the plastid. The protein resides in the chloroplast thylakoid membrane. Seems to be required for the assembly of the photosystem I complex. The chain is Photosystem I assembly protein Ycf4 from Populus alba (White poplar).